Reading from the N-terminus, the 111-residue chain is Photosystem II reaction center Psb28 protein (111 aa).

The protein belongs to the Psb28 family. Part of the photosystem II complex.

The protein localises to the cellular thylakoid membrane. This Crocosphaera subtropica (strain ATCC 51142 / BH68) (Cyanothece sp. (strain ATCC 51142)) protein is Photosystem II reaction center Psb28 protein.